The chain runs to 64 residues: MAKAAKTIKLEQTGSAIRRHHSQRSTLIGLKLNKIGRTSELPDTPAVRGMIEKVHHLVRIVDEK.

This sequence belongs to the universal ribosomal protein uL30 family. Part of the 50S ribosomal subunit.

This Bradyrhizobium diazoefficiens (strain JCM 10833 / BCRC 13528 / IAM 13628 / NBRC 14792 / USDA 110) protein is Large ribosomal subunit protein uL30.